Consider the following 150-residue polypeptide: MGNFIITERKKAKEERSNPQTDSMDDLLIRRLTDRNDKEAHLNELFQDNSGAIGGNIVSHDDALLNTLAILQKELKSKEQEIRRLKEVIALKNKNTERLNDELISGTIENNVLQQKLSDLKKEHSQLVARWLKKTEKETEAMNSEIDGTK.

The tract at residues 1-23 (MGNFIITERKKAKEERSNPQTDS) is disordered. The span at 7–17 (TERKKAKEERS) shows a compositional bias: basic and acidic residues. A coiled-coil region spans residues 61 to 130 (DDALLNTLAI…KKEHSQLVAR (70 aa)).

Belongs to the ATG16 family. Homodimer. Part of the 350 kDa complex which is at least composed of ATG5, ATG12 and ATG16. Several units of each may be present in this complex. Interacts directly with ATG12.

The protein localises to the preautophagosomal structure membrane. Its function is as follows. Stabilizes the ATG5-ATG12 conjugate and mediates the formation of the 350 kDa complex, which is necessary for autophagy. The ATG5-ATG12/ATG16 complex is required for efficient promotion of ATG8-conjugation to phosphatidylethanolamine and ATG8 localization to the pre-autophagosomal structure (PAS). Also recruits ATG3 to the PAS. Involved in endoplasmic reticulum-specific autophagic process and is essential for the survival of cells subjected to severe ER stress. The polypeptide is Autophagy-related protein 16 (ATG16) (Saccharomyces cerevisiae (strain YJM789) (Baker's yeast)).